We begin with the raw amino-acid sequence, 309 residues long: Protein-L-isoaspartate O-methyltransferase 2 (309 aa).

The Nuclear localization signal motif lies at 23-28 (KKRKKK). Ser-144 is an active-site residue.

This sequence belongs to the methyltransferase superfamily. L-isoaspartyl/D-aspartyl protein methyltransferase family. Expressed in rosette leaves, stems, cauline leaves, flowers and developing seeds.

It is found in the nucleus. The catalysed reaction is [protein]-L-isoaspartate + S-adenosyl-L-methionine = [protein]-L-isoaspartate alpha-methyl ester + S-adenosyl-L-homocysteine. In terms of biological role, catalyzes the methyl esterification of L-isoaspartyl residues in peptides and proteins that result from spontaneous decomposition of normal L-aspartyl and L-asparaginyl residues. It plays a role in the repair and/or degradation of damaged proteins. The sequence is that of Protein-L-isoaspartate O-methyltransferase 2 (PIMT2) from Arabidopsis thaliana (Mouse-ear cress).